The primary structure comprises 218 residues: Chymotrypsin-2 (218 aa).

One can recognise a Peptidase S1 domain in the interval 1–218 (IVGGTDAPRG…FLDWIQKNQL (218 aa)). Cys-25 and Cys-40 form a disulfide bridge. Catalysis depends on charge relay system residues His-39 and Asp-84. 2 disulfides stabilise this stretch: Cys-148/Cys-161 and Cys-171/Cys-195. The active-site Charge relay system is Ser-175.

The protein belongs to the peptidase S1 family.

The protein localises to the secreted. It localises to the extracellular space. It carries out the reaction Preferential cleavage: Tyr-|-Xaa, Trp-|-Xaa, Phe-|-Xaa, Leu-|-Xaa.. This Vespa crabro (European hornet) protein is Chymotrypsin-2.